Reading from the N-terminus, the 162-residue chain is 2-C-methyl-D-erythritol 2,4-cyclodiphosphate synthase (162 aa).

2 residues coordinate a divalent metal cation: aspartate 12 and histidine 14. 4-CDP-2-C-methyl-D-erythritol 2-phosphate contacts are provided by residues 12–14 (DVH) and 38–39 (HS). Histidine 46 contributes to the a divalent metal cation binding site. 4-CDP-2-C-methyl-D-erythritol 2-phosphate contacts are provided by residues 60-62 (DIG), 65-69 (FPDTD), and arginine 146.

It belongs to the IspF family. As to quaternary structure, homotrimer. The cofactor is a divalent metal cation.

The catalysed reaction is 4-CDP-2-C-methyl-D-erythritol 2-phosphate = 2-C-methyl-D-erythritol 2,4-cyclic diphosphate + CMP. It participates in isoprenoid biosynthesis; isopentenyl diphosphate biosynthesis via DXP pathway; isopentenyl diphosphate from 1-deoxy-D-xylulose 5-phosphate: step 4/6. Its function is as follows. Involved in the biosynthesis of isopentenyl diphosphate (IPP) and dimethylallyl diphosphate (DMAPP), two major building blocks of isoprenoid compounds. Catalyzes the conversion of 4-diphosphocytidyl-2-C-methyl-D-erythritol 2-phosphate (CDP-ME2P) to 2-C-methyl-D-erythritol 2,4-cyclodiphosphate (ME-CPP) with a corresponding release of cytidine 5-monophosphate (CMP). In Bordetella petrii (strain ATCC BAA-461 / DSM 12804 / CCUG 43448), this protein is 2-C-methyl-D-erythritol 2,4-cyclodiphosphate synthase.